The chain runs to 738 residues: Ethylene receptor (738 aa).

3 helical membrane-spanning segments follow: residues 23–43, 54–74, and 89–109; these read ISDFFIALAYFSIPLELIYFV, VLVQFGAFIVLCGATHLINLW, and IAKVLTAVVSCATALMLVHII. Positions 65 and 69 each coordinate Cu cation. Residues 158 to 307 form the GAF domain; it reads DRHTILRTTL…VVADQVAVAL (150 aa). The region spanning 350-589 is the Histidine kinase domain; that stretch reads VMNHEMRTPM…IFIVKLGIPE (240 aa). At H353 the chain carries Phosphohistidine; by autocatalysis. Residues 615–730 form the Response regulatory domain; the sequence is KVLLMDDNGV…KMRSVLSDLL (116 aa). At D663 the chain carries 4-aspartylphosphate.

Belongs to the ethylene receptor family. Homodimer; disulfide-linked. The cofactor is Cu cation. Post-translationally, activation probably requires a transfer of a phosphate group between a His in the transmitter domain and an Asp of the receiver domain. As to expression, higher expression in arils than in seeds.

The protein localises to the endoplasmic reticulum membrane. The catalysed reaction is ATP + protein L-histidine = ADP + protein N-phospho-L-histidine.. May act early in the ethylene signal transduction pathway, possibly as an ethylene receptor, or as a regulator of the pathway. This chain is Ethylene receptor (ETR1), found in Passiflora edulis (Passion fruit).